Reading from the N-terminus, the 432-residue chain is Peptidyl-prolyl cis-trans isomerase cyp6 (432 aa).

Residues 1–168 (MSVLIETTVG…RDIRIKHTII (168 aa)) form the PPIase cyclophilin-type domain. A Phosphoserine modification is found at serine 206. The region spanning 244–322 (NVLFVCKLNP…SRIHVDFSQS (79 aa)) is the RRM domain. Residues 330–432 (YNSNRDRKRS…DRRYRDDRYR (103 aa)) form a disordered region. 3 stretches are compositionally biased toward basic and acidic residues: residues 341–366 (SRSD…DDYR), 373–395 (DHRD…DDRS), and 406–432 (NCDD…DRYR).

Belongs to the cyclophilin-type PPIase family. PPIL4 subfamily.

It is found in the nucleus. The catalysed reaction is [protein]-peptidylproline (omega=180) = [protein]-peptidylproline (omega=0). Its function is as follows. PPIases accelerate the folding of proteins. It catalyzes the cis-trans isomerization of proline imidic peptide bonds in oligopeptides. This chain is Peptidyl-prolyl cis-trans isomerase cyp6 (cyp6), found in Schizosaccharomyces pombe (strain 972 / ATCC 24843) (Fission yeast).